The following is a 372-amino-acid chain: MFVSDNNNPSRDINMMIGDVTSNGDLQPHQIILGESSGGEDHEIIKAPKKRAETWAQDETRTLISLRREMDNLFNTSKSNKHLWEQISKKMREKGFDRSPSMCTDKWRNILKEFKKAKQHEDKATSGGSTKMSYYNEIEDIFRERKKKVAFYKSPATTTPSSAKVDSFMQFTDKGFEDTGISFTSVEANGRPTLNLETELDHDGLPLPIAADPITANGVPPWNWRDTPGNGVDGQPFAGRIITVKFGDYTRRVGIDGTAEAIKEAIRSAFRLRTRRAFWLEDEEQVIRSLDRDMPLGNYILRIDEGIAVRVCHYDESDPLPVHQEEKIFYTEEDYRDFLARRGWTCLREFDAFQNIDNMDELQSGRLYRGMR.

The region spanning 47–111 (APKKRAETWA…MCTDKWRNIL (65 aa)) is the Myb-like domain. A Phosphoserine modification is found at Ser-167.

The protein localises to the nucleus. Probable transcription factor that binds specific DNA sequence. The polypeptide is Trihelix transcription factor GT-4 (GT-4) (Arabidopsis thaliana (Mouse-ear cress)).